The following is a 209-amino-acid chain: Endonuclease III (209 aa).

Residues 108–127 (RTELESLPGVGRKTANIILN) enclose the HhH domain. Residues C187, C194, C197, and C203 each contribute to the [4Fe-4S] cluster site.

It belongs to the Nth/MutY family. It depends on [4Fe-4S] cluster as a cofactor.

The catalysed reaction is 2'-deoxyribonucleotide-(2'-deoxyribose 5'-phosphate)-2'-deoxyribonucleotide-DNA = a 3'-end 2'-deoxyribonucleotide-(2,3-dehydro-2,3-deoxyribose 5'-phosphate)-DNA + a 5'-end 5'-phospho-2'-deoxyribonucleoside-DNA + H(+). In terms of biological role, DNA repair enzyme that has both DNA N-glycosylase activity and AP-lyase activity. The DNA N-glycosylase activity releases various damaged pyrimidines from DNA by cleaving the N-glycosidic bond, leaving an AP (apurinic/apyrimidinic) site. The AP-lyase activity cleaves the phosphodiester bond 3' to the AP site by a beta-elimination, leaving a 3'-terminal unsaturated sugar and a product with a terminal 5'-phosphate. The polypeptide is Endonuclease III (Buchnera aphidicola subsp. Schizaphis graminum (strain Sg)).